We begin with the raw amino-acid sequence, 114 residues long: Phycoerythrin alpha-1 subunit (114 aa).

9 residues coordinate (2R,3E)-phycoerythrobilin: Asp-52, Ser-53, Glu-63, Arg-64, Cys-67, Thr-72, Lys-74, Ala-75, and Lys-84.

This sequence belongs to the phycoerythrin family. Heterotetramer of 2 different alpha chains and 2 identical beta chains which form 2 alpha-beta heterodimers within the heterotetramer. The two alpha-beta heterodimers are rotated to an open configuration in contrast to the closed configuration found in other cryptophyte species due to the insertion of a single amino acid, Asp-65, in a conserved region of the alpha chain. In the open form, the central chromophores are not in physical contact but are separated by a water-filled channel. Contains three phycoerythrobilin chromophores with binding mediated by both the alpha and beta subunits.

Its subcellular location is the plastid. The protein localises to the chloroplast thylakoid membrane. Its function is as follows. Light-harvesting photosynthetic tetrapyrrole chromophore-protein from the phycobiliprotein complex. The polypeptide is Phycoerythrin alpha-1 subunit (Hemiselmis andersenii (Cryptophyte alga)).